The following is a 724-amino-acid chain: Aquaglyceroporin-4 (724 aa).

Disordered stretches follow at residues 1 to 167 (MADE…SIRR), 248 to 267 (INMA…NQAD), and 302 to 396 (AHGL…DLDG). Residues 1 to 434 (MADEEIKPTS…VIRLRFREPL (434 aa)) are Cytoplasmic-facing. Positions 87–96 (LTGQVPQDND) are enriched in polar residues. Over residues 252–265 (QQQQQQQQQQPQNQ) the composition is skewed to low complexity. 2 stretches are compositionally biased toward polar residues: residues 307 to 325 (SPTN…TAPS) and 360 to 370 (PSQTSQNSQNE). Residues 435–455 (AELLAVTCQLTLGFCADLVVV) form a helical membrane-spanning segment. Residues 456 to 472 (TSGKNASPAGNEATTDW) lie on the Extracellular side of the membrane. The chain crosses the membrane as a helical span at residues 473–493 (AWGLASMLGIYIAGGISGAHL). Positions 494 to 496 (NPA) match the NPA 1 motif. Residues 494-513 (NPAISIMLWIYRGFPLRKVP) lie on the Cytoplasmic side of the membrane. The helical transmembrane segment at 514-534 (MYVLAQILGAFIAALISFGLY) threads the bilayer. Over 535–567 (QTNIVEYGGTDLKTSDTMGAFITYPRYPWINAS) the chain is Extracellular. Asparagine 565 carries an N-linked (GlcNAc...) asparagine glycan. A helical transmembrane segment spans residues 568–588 (TSFFTEFVGTAILAVAVLALG). Over 589–595 (DDMNAPP) the chain is Cytoplasmic. A helical transmembrane segment spans residues 596–616 (GAGMSAFILGLVITVLSMAFG). Over 617 to 647 (YNTGAALNPSRDLGPRLALAALGYGKDLFTD) the chain is Extracellular. An NPA 2 motif is present at residues 624 to 626 (NPS). Residues 648–668 (VYWIWGNWCAPILGAIFGAFL) form a helical membrane-spanning segment. The Cytoplasmic segment spans residues 669–724 (YDAAIFAGGESPVNYPRKRIKRAGHKWRKKWGVRLRKMKPAKKGEDEAYRRWKESQ).

The protein belongs to the MIP/aquaporin (TC 1.A.8) family.

It localises to the membrane. The enzyme catalyses H2O(in) = H2O(out). The catalysed reaction is glycerol(in) = glycerol(out). In terms of biological role, water channel required to facilitate the transport of water across membranes. May play a role in the vegetative growth. This is Aquaglyceroporin-4 from Botryotinia fuckeliana (strain B05.10) (Noble rot fungus).